The sequence spans 380 residues: tRNA-specific 2-thiouridylase MnmA (380 aa).

Residues Gly-9–Ser-16 and Met-35 contribute to the ATP site. Residues Asn-94 to Asp-96 are interaction with target base in tRNA. Cys-99 acts as the Nucleophile in catalysis. An intrachain disulfide couples Cys-99 to Cys-195. Gly-123 lines the ATP pocket. The interval Lys-145–Gln-147 is interaction with tRNA. The Cysteine persulfide intermediate role is filled by Cys-195. Residues Arg-308–Tyr-309 are interaction with tRNA.

The protein belongs to the MnmA/TRMU family.

Its subcellular location is the cytoplasm. The catalysed reaction is S-sulfanyl-L-cysteinyl-[protein] + uridine(34) in tRNA + AH2 + ATP = 2-thiouridine(34) in tRNA + L-cysteinyl-[protein] + A + AMP + diphosphate + H(+). Catalyzes the 2-thiolation of uridine at the wobble position (U34) of tRNA, leading to the formation of s(2)U34. The chain is tRNA-specific 2-thiouridylase MnmA from Stenotrophomonas maltophilia (strain R551-3).